The following is a 196-amino-acid chain: Pyridoxal 5'-phosphate synthase subunit PdxT (196 aa).

L-glutamine is bound at residue 52–54 (GES). The Nucleophile role is filled by cysteine 84. L-glutamine is bound by residues arginine 113 and 141–142 (IR). Active-site charge relay system residues include histidine 178 and glutamate 180.

The protein belongs to the glutaminase PdxT/SNO family. As to quaternary structure, in the presence of PdxS, forms a dodecamer of heterodimers. Only shows activity in the heterodimer.

The catalysed reaction is aldehydo-D-ribose 5-phosphate + D-glyceraldehyde 3-phosphate + L-glutamine = pyridoxal 5'-phosphate + L-glutamate + phosphate + 3 H2O + H(+). It carries out the reaction L-glutamine + H2O = L-glutamate + NH4(+). The protein operates within cofactor biosynthesis; pyridoxal 5'-phosphate biosynthesis. Functionally, catalyzes the hydrolysis of glutamine to glutamate and ammonia as part of the biosynthesis of pyridoxal 5'-phosphate. The resulting ammonia molecule is channeled to the active site of PdxS. This is Pyridoxal 5'-phosphate synthase subunit PdxT from Pyrococcus abyssi (strain GE5 / Orsay).